Consider the following 281-residue polypeptide: 2-dehydro-3-deoxyphosphooctonate aldolase (281 aa).

It belongs to the KdsA family.

The protein resides in the cytoplasm. The enzyme catalyses D-arabinose 5-phosphate + phosphoenolpyruvate + H2O = 3-deoxy-alpha-D-manno-2-octulosonate-8-phosphate + phosphate. Its pathway is carbohydrate biosynthesis; 3-deoxy-D-manno-octulosonate biosynthesis; 3-deoxy-D-manno-octulosonate from D-ribulose 5-phosphate: step 2/3. It functions in the pathway bacterial outer membrane biogenesis; lipopolysaccharide biosynthesis. This chain is 2-dehydro-3-deoxyphosphooctonate aldolase, found in Psychromonas ingrahamii (strain DSM 17664 / CCUG 51855 / 37).